Here is a 247-residue protein sequence, read N- to C-terminus: DNA polymerase sliding clamp (247 aa).

The protein belongs to the PCNA family. As to quaternary structure, homotrimer. The subunits circularize to form a toroid; DNA passes through its center. Replication factor C (RFC) is required to load the toroid on the DNA.

In terms of biological role, sliding clamp subunit that acts as a moving platform for DNA processing. Responsible for tethering the catalytic subunit of DNA polymerase and other proteins to DNA during high-speed replication. This is DNA polymerase sliding clamp from Methanospirillum hungatei JF-1 (strain ATCC 27890 / DSM 864 / NBRC 100397 / JF-1).